The chain runs to 494 residues: METTTIDIQALKKELVLDLIQIGALKFGRFTLKSGIVSPFYVDLRIIGPKMLRQFSVLLYHVMTVKGLTNMEKRVICGVPYSALTFSSCMSMTYDLPMVICRKERKQYGTGNMVEGIYTKNETNCILIEDVITSGASIVETAEKLENEGLLVTDALVFLTREQLPLTNGMHILKKGEKVYNVHPCLTMTEVTQVLLDEGKMSQEQREDILQFIGTNTFSETKTTAVPQKKKELTFTERAELTNNEFSKKLFKLMEEKQTNLCVAADITSKDDLLKLADETGPEICMLKTHIDTLDDQPDEQFTQQLKELAKKHNFLIFEDRKLADIGQVVKQQYARGPFKIAQWSDLCNSHLVSGGSATVKALKESLKEENITEPRGLLLIAQMSTEGATTGESTKQEALKVALENPDFVSGFICQSKLRDDLDQFLYCTPGVRLDVKGDSLGQQYNSPEYVVCEKKCDVIIVGRGIYHDKERQNAAKLYRKLGWEAYQKRIQQ.

Residues Asp266 and 288 to 290 contribute to the UMP site; that span reads KTH. Orotidine 5'-phosphate-binding positions include Lys288, Lys322, Asp325, Ser385, 444 to 446, and 464 to 465; these read QQY and GR. Lys322 is a catalytic residue. UMP contacts are provided by residues Asp325, Ser385, 444-446, and 464-465; these read QQY and GR.

In the N-terminal section; belongs to the purine/pyrimidine phosphoribosyltransferase family. It in the C-terminal section; belongs to the OMP decarboxylase family.

The catalysed reaction is orotidine 5'-phosphate + diphosphate = orotate + 5-phospho-alpha-D-ribose 1-diphosphate. The enzyme catalyses orotidine 5'-phosphate + H(+) = UMP + CO2. The protein operates within pyrimidine metabolism; UMP biosynthesis via de novo pathway; UMP from orotate: step 1/2. It functions in the pathway pyrimidine metabolism; UMP biosynthesis via de novo pathway; UMP from orotate: step 2/2. Its function is as follows. Bifunctional enzyme catalyzing the last two steps of de novo pyrimidine biosynthesis, orotate phosphoribosyltransferase (OPRT), which converts orotate to orotidine-5'-monophosphate (OMP), and orotidine-5'-monophosphate decarboxylase (ODC), the terminal enzymatic reaction that decarboxylates OMP to uridine monophosphate (UMP). The chain is Uridine 5'-monophosphate synthase (UMP) from Naegleria gruberi (Amoeba).